Consider the following 73-residue polypeptide: SIFamide-related peptide (73 aa).

The first 23 residues, 1–23 (MVSIRLTFALAIVAIIFAFSVDA), serve as a signal peptide directing secretion. Phe-35 carries the phenylalanine amide modification. Positions 39-73 (SNTMTDYEFTSRALSAICEVASETCTAWMSRQESN) are excised as a propeptide.

As to expression, expressed in brain, the retrocerebral complex and in ventral, thoracic and abdominal ganglia (at protein level).

Its subcellular location is the secreted. The sequence is that of SIFamide-related peptide from Camponotus floridanus (Florida carpenter ant).